A 164-amino-acid chain; its full sequence is UBA-like domain-containing protein 2 (164 aa).

N-acetylserine is present on Ser2. A disordered region spans residues 128-164 (SSPTTFHHLHRPQPTWPPGAQQGGAQQKAMAAMDGQR). Positions 146-164 (GAQQGGAQQKAMAAMDGQR) are enriched in low complexity.

Belongs to the UBALD family.

The chain is UBA-like domain-containing protein 2 (UBALD2) from Homo sapiens (Human).